Reading from the N-terminus, the 438-residue chain is Chromosomal replication initiator protein DnaA (438 aa).

Residues 1-68 (MKDNILSALK…VVKESLGKDA (68 aa)) form a domain I, interacts with DnaA modulators region. The interval 68 to 98 (ATFEIVYKEIDITQENEEKGPLVRKRPLLIT) is domain II. The domain III, AAA+ region stretch occupies residues 99–314 (PLNPKYTFEN…GAILKLIAYK (216 aa)). Residues Gly-142, Gly-144, Lys-145, and Thr-146 each coordinate ATP. Positions 315 to 438 (NLYGSLNLSI…TKNFAQGESI (124 aa)) are domain IV, binds dsDNA.

This sequence belongs to the DnaA family. Oligomerizes as a right-handed, spiral filament on DNA at oriC.

Its subcellular location is the cytoplasm. Its function is as follows. Plays an essential role in the initiation and regulation of chromosomal replication. ATP-DnaA binds to the origin of replication (oriC) to initiate formation of the DNA replication initiation complex once per cell cycle. Binds the DnaA box (a 9 base pair repeat at the origin) and separates the double-stranded (ds)DNA. Forms a right-handed helical filament on oriC DNA; dsDNA binds to the exterior of the filament while single-stranded (ss)DNA is stabiized in the filament's interior. The ATP-DnaA-oriC complex binds and stabilizes one strand of the AT-rich DNA unwinding element (DUE), permitting loading of DNA polymerase. After initiation quickly degrades to an ADP-DnaA complex that is not apt for DNA replication. Binds acidic phospholipids. This chain is Chromosomal replication initiator protein DnaA, found in Thermosipho africanus (strain TCF52B).